A 161-amino-acid chain; its full sequence is Allophycocyanin beta chain (161 aa).

An N4-methylasparagine modification is found at Asn71. Cys81 contacts (2R,3E)-phycocyanobilin.

This sequence belongs to the phycobiliprotein family. Heterodimer of an alpha and a beta chain. Contains one covalently linked phycocyanobilin chromophore.

It is found in the cellular thylakoid membrane. Functionally, light-harvesting photosynthetic bile pigment-protein from the phycobiliprotein complex. Allophycocyanin has a maximum absorption at approximately 650 nanometers. The sequence is that of Allophycocyanin beta chain (apcB) from Mastigocladus laminosus (Fischerella sp.).